Reading from the N-terminus, the 279-residue chain is Replication protein A 32 kDa subunit A (279 aa).

Residues 1-33 (MFSSSQFEPNSGFSGGGFMSSQPSQAYESSSST) are disordered. A compositionally biased stretch (low complexity) spans 19-32 (MSSQPSQAYESSSS). The OB DNA-binding region spans 73-148 (VSLVGLVCDK…QLLVFSVRPI (76 aa)).

This sequence belongs to the replication factor A protein 2 family. As to quaternary structure, heterotrimer of RPA1, RPA2 and RPA3 (canonical replication protein A complex). Interacts with ROS1. Binds to ASE1/At3g02920, PDX2, At5g62350, RPA1A/At2g06510, ARF1/At1g10630, At4g18590 and At3g52630. Phosphorylated in a cell-cycle-dependent manner (from the S phase until mitosis). In response to DNA damage, recruited to DNA-repair nuclear foci, as a hypophosphorylated form. In terms of tissue distribution, strongly expressed in shoot and root meristems. Present in seedlings, roots, leaves, siliques and flowers.

The protein localises to the nucleus. In terms of biological role, component of the replication protein A complex (RPA) required for DNA recombination, repair and replication. The activity of RPA is mediated by single-stranded DNA binding and protein interactions. Required fo cell division in meristems. Involved in the maintenance of transcriptional epigenetic gene silencing (TGS) at specific loci (including some transposons) by regulating histone H3 acetylation, 'Lys-4' and 'Lys-9' methylation. The chain is Replication protein A 32 kDa subunit A (RPA2A) from Arabidopsis thaliana (Mouse-ear cress).